A 118-amino-acid polypeptide reads, in one-letter code: uncharacterized protein (118 aa).

This is an uncharacterized protein from Rickettsia prowazekii (strain Madrid E).